The primary structure comprises 450 residues: Phosphoglucosamine mutase (450 aa).

S101 acts as the Phosphoserine intermediate in catalysis. Residues S101, D240, D242, and D244 each coordinate Mg(2+). S101 is subject to Phosphoserine.

Belongs to the phosphohexose mutase family. The cofactor is Mg(2+). Activated by phosphorylation.

The enzyme catalyses alpha-D-glucosamine 1-phosphate = D-glucosamine 6-phosphate. Catalyzes the conversion of glucosamine-6-phosphate to glucosamine-1-phosphate. This chain is Phosphoglucosamine mutase, found in Streptococcus equi subsp. equi (strain 4047).